The chain runs to 181 residues: RING-H2 finger protein ATL56 (181 aa).

The disordered stretch occupies residues 1–24; sequence MPPTNNYRISGEPPSTTPSHPPPK. Residues 15–24 are compositionally biased toward pro residues; the sequence is STTPSHPPPK. Residues 32–52 traverse the membrane as a helical segment; sequence LFLVGVIMFSIFFLFLVLIGI. Residues 110 to 152 form an RING-type; atypical zinc finger; it reads CVVCFDGFRQGQWCRNLPGCGHVFHRKCVDTWLLKASTCPICR.

The protein belongs to the RING-type zinc finger family. ATL subfamily.

Its subcellular location is the membrane. The catalysed reaction is S-ubiquitinyl-[E2 ubiquitin-conjugating enzyme]-L-cysteine + [acceptor protein]-L-lysine = [E2 ubiquitin-conjugating enzyme]-L-cysteine + N(6)-ubiquitinyl-[acceptor protein]-L-lysine.. Its pathway is protein modification; protein ubiquitination. This chain is RING-H2 finger protein ATL56 (ATL56), found in Arabidopsis thaliana (Mouse-ear cress).